The primary structure comprises 464 residues: Leucine-rich repeat-containing protein 34 (464 aa).

The segment at 1–48 is disordered; the sequence is MAAQPPRPVGERSMGSSREAARAPARSPAWASTQASTPGAALAVQRES. A compositionally biased stretch (low complexity) spans 16–32; that stretch reads SSREAARAPARSPAWAS. LRR repeat units lie at residues 295-315 and 323-345; these read SLRY…VYLA and TLEV…LSET.

Interacts with NPM1 and NCL.

The protein localises to the nucleus. Its subcellular location is the nucleolus. It is found in the cytoplasm. Highly expressed in stem cells where it may be involved in regulation of pluripotency. In embryonic stem cells (ESCs), important for normal expression of the pluripotency regulators POU5F1/OCT4 and KLF4. Also important for expression of the ectodermal marker gene NES and the endodermal marker gene GATA4. Promotes stem cell proliferation in vitro. The polypeptide is Leucine-rich repeat-containing protein 34 (LRRC34) (Homo sapiens (Human)).